The chain runs to 1033 residues: Tyrosine-protein kinase-like otk (1033 aa).

An N-terminal signal peptide occupies residues 1-22 (MTARMISICGLVMALMMASVLA). The Extracellular segment spans residues 23-581 (SSSRFQRVPQ…GGDGFLVTRA (559 aa)). 5 Ig-like C2-type domains span residues 25 to 114 (SRFQ…AKLS), 113 to 199 (LSVI…RVMS), 251 to 365 (PEDL…APIN), 368 to 463 (PGIL…VAIN), and 468 to 558 (PKFS…VQLV). N-linked (GlcNAc...) asparagine glycosylation occurs at N39. 4 cysteine pairs are disulfide-bonded: C46–C95, C137–C188, C276–C354, and C399–C447. Residues N336, N417, N429, N444, N457, N512, and N524 are each glycosylated (N-linked (GlcNAc...) asparagine). A disulfide bridge links C490 with C542. The chain crosses the membrane as a helical span at residues 582-602 (VLITMTVALAYIVLVVGLMLW). At 603–1033 (CRYRRQARKA…LSKAMQSAEK (431 aa)) the chain is on the cytoplasmic side. Disordered regions lie at residues 617-679 (LSTK…KKSA) and 718-760 (SPSD…KTSM). Polar residues predominate over residues 655-673 (KSSGDAQKSDDTACSQQSR). At S678 the chain carries Phosphoserine. Residues 692–1028 (LSELIQIGRG…QLGAALSKAM (337 aa)) enclose the Protein kinase; inactive domain. Basic and acidic residues predominate over residues 720–731 (SDKDADTEKQHS).

This sequence belongs to the protein kinase superfamily. Tyr protein kinase family. Insulin receptor subfamily. In terms of assembly, interacts with plexA; component of a receptor complex that mediates the repulsive signaling in response to Semaphorin ligands. In terms of tissue distribution, dynamically expressed during embryogenesis in several areas of the developing nervous system, including neurons and fasciculating axons. Expression in stage 7 embryos is seen in the anterior midgut primordia, cephalic furrow and along the germinal band. At stage 11, expression is in 15 stripes over the trunk region, and in the anterior and posterior midgut primordia. Stage 12 shows expression in the developing nervous system, procephalic lobe and maxillar bud. Stage 13 shows expression in the ventral cord, maxillar segment and in three regions of the gut. At stage 16 expression is preferentially detected throughout the nervous system, including the neuromers in the ventral cord and the supraesophageal ganglion (at protein level). In larva, expression is seen in developing R cells and is localized predominantly to R1-R6 growth cones.

The protein localises to the cell membrane. Its function is as follows. Acts as a calcium-dependent, homophilic cell adhesion molecule that regulates neural recognition during the development of the nervous system. Component of the repulsive Plexin signaling response to regulate motor axon guidance at the embryonic stage. Also component of a receptor complex that is required in the adult visual system to innervate the lamina layer; specific targeting of R1-R6 axons. The polypeptide is Tyrosine-protein kinase-like otk (Drosophila melanogaster (Fruit fly)).